The following is a 455-amino-acid chain: Tubulin alpha chain (455 aa).

Glutamine 11, glutamate 77, serine 145, glycine 149, threonine 150, serine 184, asparagine 211, and asparagine 233 together coordinate GTP. Residue glutamate 77 participates in Mg(2+) binding. Glutamate 259 is an active-site residue.

The protein belongs to the tubulin family. In terms of assembly, dimer of alpha and beta chains. A typical microtubule is a hollow water-filled tube with an outer diameter of 25 nm and an inner diameter of 15 nM. Alpha-beta heterodimers associate head-to-tail to form protofilaments running lengthwise along the microtubule wall with the beta-tubulin subunit facing the microtubule plus end conferring a structural polarity. Microtubules usually have 13 protofilaments but different protofilament numbers can be found in some organisms and specialized cells. Requires Mg(2+) as cofactor.

The protein resides in the cytoplasm. It is found in the cytoskeleton. The enzyme catalyses GTP + H2O = GDP + phosphate + H(+). Functionally, tubulin is the major constituent of microtubules, a cylinder consisting of laterally associated linear protofilaments composed of alpha- and beta-tubulin heterodimers. Microtubules grow by the addition of GTP-tubulin dimers to the microtubule end, where a stabilizing cap forms. Below the cap, tubulin dimers are in GDP-bound state, owing to GTPase activity of alpha-tubulin. This is Tubulin alpha chain from Entamoeba histolytica (strain ATCC 30459 / HM-1:IMSS / ABRM).